We begin with the raw amino-acid sequence, 427 residues long: Enolase (427 aa).

(2R)-2-phosphoglycerate is bound at residue Gln163. Residue Glu205 is the Proton donor of the active site. Mg(2+) is bound by residues Asp242, Glu285, and Asp312. 4 residues coordinate (2R)-2-phosphoglycerate: Lys337, Arg366, Ser367, and Lys388. Lys337 serves as the catalytic Proton acceptor.

Belongs to the enolase family. Mg(2+) is required as a cofactor.

It localises to the cytoplasm. The protein localises to the secreted. Its subcellular location is the cell surface. The enzyme catalyses (2R)-2-phosphoglycerate = phosphoenolpyruvate + H2O. It functions in the pathway carbohydrate degradation; glycolysis; pyruvate from D-glyceraldehyde 3-phosphate: step 4/5. Its function is as follows. Catalyzes the reversible conversion of 2-phosphoglycerate (2-PG) into phosphoenolpyruvate (PEP). It is essential for the degradation of carbohydrates via glycolysis. The protein is Enolase of Laribacter hongkongensis (strain HLHK9).